A 151-amino-acid chain; its full sequence is Large ribosomal subunit protein bL9 (151 aa).

This sequence belongs to the bacterial ribosomal protein bL9 family.

In terms of biological role, binds to the 23S rRNA. The chain is Large ribosomal subunit protein bL9 from Chloroherpeton thalassium (strain ATCC 35110 / GB-78).